The primary structure comprises 290 residues: Pyridoxal kinase PdxY (290 aa).

Ser14 is a substrate binding site. Positions 116 and 153 each coordinate ATP. Substrate is bound at residue Asp226.

This sequence belongs to the pyridoxine kinase family. PdxY subfamily. As to quaternary structure, homodimer. Mg(2+) serves as cofactor.

It carries out the reaction pyridoxal + ATP = pyridoxal 5'-phosphate + ADP + H(+). The protein operates within cofactor metabolism; pyridoxal 5'-phosphate salvage; pyridoxal 5'-phosphate from pyridoxal: step 1/1. Functionally, pyridoxal kinase involved in the salvage pathway of pyridoxal 5'-phosphate (PLP). Catalyzes the phosphorylation of pyridoxal to PLP. The protein is Pyridoxal kinase PdxY of Rubrobacter xylanophilus (strain DSM 9941 / JCM 11954 / NBRC 16129 / PRD-1).